The primary structure comprises 289 residues: Acetyl-coenzyme A carboxylase carboxyl transferase subunit beta (289 aa).

One can recognise a CoA carboxyltransferase N-terminal domain in the interval 28 to 289 (VMTKCPKCKK…QGGEMAVWQS (262 aa)). Residues C32, C35, C51, and C54 each coordinate Zn(2+). The C4-type zinc finger occupies 32–54 (CPKCKKIMYTKEVLKNLKVCVNC).

The protein belongs to the AccD/PCCB family. As to quaternary structure, acetyl-CoA carboxylase is a heterohexamer composed of biotin carboxyl carrier protein (AccB), biotin carboxylase (AccC) and two subunits each of ACCase subunit alpha (AccA) and ACCase subunit beta (AccD). Zn(2+) is required as a cofactor.

The protein resides in the cytoplasm. The catalysed reaction is N(6)-carboxybiotinyl-L-lysyl-[protein] + acetyl-CoA = N(6)-biotinyl-L-lysyl-[protein] + malonyl-CoA. The protein operates within lipid metabolism; malonyl-CoA biosynthesis; malonyl-CoA from acetyl-CoA: step 1/1. Its function is as follows. Component of the acetyl coenzyme A carboxylase (ACC) complex. Biotin carboxylase (BC) catalyzes the carboxylation of biotin on its carrier protein (BCCP) and then the CO(2) group is transferred by the transcarboxylase to acetyl-CoA to form malonyl-CoA. The polypeptide is Acetyl-coenzyme A carboxylase carboxyl transferase subunit beta (Bacillus thuringiensis subsp. konkukian (strain 97-27)).